A 247-amino-acid polypeptide reads, in one-letter code: 6-phosphogluconolactonase (247 aa).

The protein belongs to the glucosamine/galactosamine-6-phosphate isomerase family. 6-phosphogluconolactonase subfamily.

It catalyses the reaction 6-phospho-D-glucono-1,5-lactone + H2O = 6-phospho-D-gluconate + H(+). Its pathway is carbohydrate degradation; pentose phosphate pathway; D-ribulose 5-phosphate from D-glucose 6-phosphate (oxidative stage): step 2/3. Hydrolysis of 6-phosphogluconolactone to 6-phosphogluconate. This is 6-phosphogluconolactonase (pgl) from Mycobacterium leprae (strain TN).